The primary structure comprises 96 residues: ATP-dependent Clp protease adapter protein ClpS (96 aa).

This sequence belongs to the ClpS family. Binds to the N-terminal domain of the chaperone ClpA.

In terms of biological role, involved in the modulation of the specificity of the ClpAP-mediated ATP-dependent protein degradation. The protein is ATP-dependent Clp protease adapter protein ClpS of Streptomyces coelicolor (strain ATCC BAA-471 / A3(2) / M145).